Here is a 425-residue protein sequence, read N- to C-terminus: Serine--tRNA ligase (425 aa).

228–230 (TAE) lines the L-serine pocket. ATP is bound at residue 259-261 (RSE). Glu-282 contacts L-serine. An ATP-binding site is contributed by 346 to 349 (EIAS). Ser-382 contacts L-serine.

It belongs to the class-II aminoacyl-tRNA synthetase family. Type-1 seryl-tRNA synthetase subfamily. Homodimer. The tRNA molecule binds across the dimer.

Its subcellular location is the cytoplasm. It carries out the reaction tRNA(Ser) + L-serine + ATP = L-seryl-tRNA(Ser) + AMP + diphosphate + H(+). The catalysed reaction is tRNA(Sec) + L-serine + ATP = L-seryl-tRNA(Sec) + AMP + diphosphate + H(+). It participates in aminoacyl-tRNA biosynthesis; selenocysteinyl-tRNA(Sec) biosynthesis; L-seryl-tRNA(Sec) from L-serine and tRNA(Sec): step 1/1. Catalyzes the attachment of serine to tRNA(Ser). Is also able to aminoacylate tRNA(Sec) with serine, to form the misacylated tRNA L-seryl-tRNA(Sec), which will be further converted into selenocysteinyl-tRNA(Sec). This Rickettsia africae (strain ESF-5) protein is Serine--tRNA ligase.